Here is a 421-residue protein sequence, read N- to C-terminus: Serine hydroxymethyltransferase (421 aa).

Residues Leu-121 and 125–127 (GHL) each bind (6S)-5,6,7,8-tetrahydrofolate. An N6-(pyridoxal phosphate)lysine modification is found at Lys-230. Residues Glu-246 and 354 to 356 (SPF) contribute to the (6S)-5,6,7,8-tetrahydrofolate site.

The protein belongs to the SHMT family. As to quaternary structure, homodimer. Pyridoxal 5'-phosphate is required as a cofactor.

The protein resides in the cytoplasm. The enzyme catalyses (6R)-5,10-methylene-5,6,7,8-tetrahydrofolate + glycine + H2O = (6S)-5,6,7,8-tetrahydrofolate + L-serine. The protein operates within one-carbon metabolism; tetrahydrofolate interconversion. Its pathway is amino-acid biosynthesis; glycine biosynthesis; glycine from L-serine: step 1/1. Its function is as follows. Catalyzes the reversible interconversion of serine and glycine with tetrahydrofolate (THF) serving as the one-carbon carrier. This reaction serves as the major source of one-carbon groups required for the biosynthesis of purines, thymidylate, methionine, and other important biomolecules. Also exhibits THF-independent aldolase activity toward beta-hydroxyamino acids, producing glycine and aldehydes, via a retro-aldol mechanism. This is Serine hydroxymethyltransferase from Rickettsia felis (strain ATCC VR-1525 / URRWXCal2) (Rickettsia azadi).